Here is a 905-residue protein sequence, read N- to C-terminus: Patched domain-containing protein 3 (905 aa).

Positions 1–67 are disordered; it reads MISSKVAPGE…PVGQEAPPPR (67 aa). Residues 94-114 form a helical membrane-spanning segment; that stretch reads WLFLLGPVLLTASLGTGLIFL. 4 N-linked (GlcNAc...) asparagine glycosylation sites follow: Asn146, Asn199, Asn229, and Asn233. 6 consecutive transmembrane segments (helical) span residues 337–357, 369–389, 391–411, 441–461, 475–495, and 558–578; these read TVIP…VVSC, VAVF…GLML, IGVP…GVGV, VAVS…TGIT, GTTL…IMAL, and FIVV…CFQV. Residues 338 to 495 enclose the SSD domain; the sequence is VIPLFHLAYI…ITCFGAIMAL (158 aa). 3 N-linked (GlcNAc...) asparagine glycosylation sites follow: Asn647, Asn661, and Asn692. Transmembrane regions (helical) follow at residues 759-779, 781-801, 813-833, 849-869, and 882-902; these read VMIA…HPVC, LWVT…MAFW, LVIC…AFVS, LLGY…CVLA, and IMFL…PVFL.

It belongs to the patched family. As to expression, expressed in germ cells of the testis (at protein level).

It localises to the cell projection. It is found in the cilium. The protein localises to the flagellum membrane. The protein resides in the endoplasmic reticulum membrane. May play a role in sperm development or sperm function. However, does not appear to have an essential role in spermatogenesis or male fertility. The chain is Patched domain-containing protein 3 from Rattus norvegicus (Rat).